The primary structure comprises 259 residues: 3-deoxy-manno-octulosonate cytidylyltransferase (259 aa).

This sequence belongs to the KdsB family.

It localises to the cytoplasm. It carries out the reaction 3-deoxy-alpha-D-manno-oct-2-ulosonate + CTP = CMP-3-deoxy-beta-D-manno-octulosonate + diphosphate. Its pathway is nucleotide-sugar biosynthesis; CMP-3-deoxy-D-manno-octulosonate biosynthesis; CMP-3-deoxy-D-manno-octulosonate from 3-deoxy-D-manno-octulosonate and CTP: step 1/1. The protein operates within bacterial outer membrane biogenesis; lipopolysaccharide biosynthesis. In terms of biological role, activates KDO (a required 8-carbon sugar) for incorporation into bacterial lipopolysaccharide in Gram-negative bacteria. The chain is 3-deoxy-manno-octulosonate cytidylyltransferase from Xanthomonas axonopodis pv. citri (strain 306).